The primary structure comprises 306 residues: Curved DNA-binding protein (306 aa).

Residues 5-69 (DYYAIMGVKP…QRRAEYDQMW (65 aa)) enclose the J domain.

The protein resides in the cytoplasm. Its subcellular location is the nucleoid. DNA-binding protein that preferentially recognizes a curved DNA sequence. It is probably a functional analog of DnaJ; displays overlapping activities with DnaJ, but functions under different conditions, probably acting as a molecular chaperone in an adaptive response to environmental stresses other than heat shock. Lacks autonomous chaperone activity; binds native substrates and targets them for recognition by DnaK. Its activity is inhibited by the binding of CbpM. This is Curved DNA-binding protein from Escherichia coli O17:K52:H18 (strain UMN026 / ExPEC).